The primary structure comprises 178 residues: SsrA-binding protein (178 aa).

A disordered region spans residues 1–28 (MAKKSTPVDSGRSKGKKASAPRGGGPAV).

This sequence belongs to the SmpB family.

Its subcellular location is the cytoplasm. Required for rescue of stalled ribosomes mediated by trans-translation. Binds to transfer-messenger RNA (tmRNA), required for stable association of tmRNA with ribosomes. tmRNA and SmpB together mimic tRNA shape, replacing the anticodon stem-loop with SmpB. tmRNA is encoded by the ssrA gene; the 2 termini fold to resemble tRNA(Ala) and it encodes a 'tag peptide', a short internal open reading frame. During trans-translation Ala-aminoacylated tmRNA acts like a tRNA, entering the A-site of stalled ribosomes, displacing the stalled mRNA. The ribosome then switches to translate the ORF on the tmRNA; the nascent peptide is terminated with the 'tag peptide' encoded by the tmRNA and targeted for degradation. The ribosome is freed to recommence translation, which seems to be the essential function of trans-translation. This Corynebacterium urealyticum (strain ATCC 43042 / DSM 7109) protein is SsrA-binding protein.